A 1349-amino-acid chain; its full sequence is MEELFNFFQKPKGPVKFNKVKISLASPEQIIDWSHGEVKKPETINYRTFKPERDGLFCAKVFGPVKDFECNCGKYKRMKHRGVVCEKCGVEVIQSKVRRERLGHISLAAPVAHIWFLKSLPSKIGAVLDMTLKQLEKVLYFENYAVTQSEVEELPLGTLLTEEKYRQALSEYPAQFKVGIGAEAIRELLAAQDLIGLSRVLREEMASTSSQTKRQKLGKRLFVIEAFRDSGNKPEWMILQVIPVLPPDLRPLVPLEGGRFATSDLNDLYRRVINRNNRLKRLLELDAPDIIIRNEKRMLQESVDVLFDNGRRGRVITGANKRPLKSLSDMLKGKQGRFRQNLLGKRVDYSGRSVIVVGPHLRLHQCGIPKKMALELFKPFIYNRLERKGLVTTIKSARKMVEKGAKEVWDVLEEVVTEYPVILNRAPTLHRLGMQAFEAVLIEGKAIRLHPLVCMAFNADFDGDQMAVHVPLSVEAQVEARVLMMSTNNILSPANGEPVIIPSQDIVLGLYYMTRERINVKGEGRVFSSVDEAIISYDYKETDLQAKVKVRRPEGIVDTTMGRIILGELVPKSVPFVEVNKVMSKKALAALIDYTYRHAGTKDTVILADRLKDTGYEYATRAGISICIDDMKIPATKVGLVKKGEDEVLDVEQQYSDGLITAGEKYNKVIDIWSKVSEDVANEMMDEIKTETFEDKDGNLVEGPSFNSIFVMADSGARGSRDQIRQLAGMRGLMAKPSGAIIETPIKANFREGLDVLEYFISTHGARKGLADTALKTANSGYLTRRLVDVAQEATIVEADCQTLDGIVAEPLLDGGEVLVPLGDRILGRVALEDVVDPFTGEVLVVAGEQMEEDKVAILEEAGIDRVMIRSVLTCRSKRGVCAACYGRDLGRGHLINQGEAVGVIAAQSIGEPGTQLTMRTFHIGGTASRSVEQAEIRTHRGGKVAFNNLHYVENSSGVKIVMNRNAEIFVKDEFGRDREKFKVNYGAQVLVKEGEDIERDTVLADWDAYTIPIVAEVGGIIRYGDIFNGITMQEKVDPVTGKSSMVIVHSAGGVTLNPRISVKNDRGKTLKLPDSEGFARYSLPVGSLISVEEGAEIKAGTIVGKIPRETSKTKDITGGLPRVAELFEVRKPKDPAIIARIDGKVSFGKELKGKRRVVVTPEYGEQQEYLVPKAKHIIVHEGDYVQAGEPLMEGTIVPNDILSVLGVKALAKFLVDEIQEVYRLQGVKINDKHIEVIVRQMLKRVHITRANDSKFMIGENVEWWKFEEERDRLLAEGKKPGAAEPLLLGVTKASLSTESFISAASFQETTKVLTNAAMSGRVDELLGLKENVIMGRLISAGTGINRVD.

Cys70, Cys72, Cys85, and Cys88 together coordinate Zn(2+). Residues Asp460, Asp462, and Asp464 each coordinate Mg(2+). Residues Cys801, Cys875, Cys882, and Cys885 each coordinate Zn(2+).

Belongs to the RNA polymerase beta' chain family. As to quaternary structure, the RNAP catalytic core consists of 2 alpha, 1 beta, 1 beta' and 1 omega subunit. When a sigma factor is associated with the core the holoenzyme is formed, which can initiate transcription. The cofactor is Mg(2+). Zn(2+) serves as cofactor.

It carries out the reaction RNA(n) + a ribonucleoside 5'-triphosphate = RNA(n+1) + diphosphate. In terms of biological role, DNA-dependent RNA polymerase catalyzes the transcription of DNA into RNA using the four ribonucleoside triphosphates as substrates. The sequence is that of DNA-directed RNA polymerase subunit beta' from Desulfotalea psychrophila (strain LSv54 / DSM 12343).